The sequence spans 257 residues: RING-H2 finger protein ATL5 (257 aa).

The chain crosses the membrane as a helical span at residues 28-48 (IMLASVIILFVAVILILCFHS). An RING-type; atypical zinc finger spans residues 113 to 155 (CSVCLSEFEEDDEGRVLPKCGHVFHVDCIDTWFRSRSSCPLCR). The disordered stretch occupies residues 181-209 (EDTEAGSSSSSDESESSTPSSSSGSPVRF). A compositionally biased stretch (low complexity) spans 185–206 (AGSSSSSDESESSTPSSSSGSP).

The protein belongs to the RING-type zinc finger family. ATL subfamily.

Its subcellular location is the membrane. It catalyses the reaction S-ubiquitinyl-[E2 ubiquitin-conjugating enzyme]-L-cysteine + [acceptor protein]-L-lysine = [E2 ubiquitin-conjugating enzyme]-L-cysteine + N(6)-ubiquitinyl-[acceptor protein]-L-lysine.. It functions in the pathway protein modification; protein ubiquitination. The sequence is that of RING-H2 finger protein ATL5 (ATL5) from Arabidopsis thaliana (Mouse-ear cress).